The sequence spans 539 residues: Putative cysteine ligase BshC (539 aa).

Residues 249-270 (VETNDEVTNRLNESQAAMKRAG) adopt a coiled-coil conformation.

Belongs to the BshC family.

Its function is as follows. Involved in bacillithiol (BSH) biosynthesis. May catalyze the last step of the pathway, the addition of cysteine to glucosamine malate (GlcN-Mal) to generate BSH. The protein is Putative cysteine ligase BshC of Bacillus pumilus (strain SAFR-032).